A 184-amino-acid polypeptide reads, in one-letter code: ATP synthase subunit b 1 (184 aa).

A helical transmembrane segment spans residues 4–24 (LSILAALAASPAMAATGPFFS).

This sequence belongs to the ATPase B chain family. F-type ATPases have 2 components, F(1) - the catalytic core - and F(0) - the membrane proton channel. F(1) has five subunits: alpha(3), beta(3), gamma(1), delta(1), epsilon(1). F(0) has three main subunits: a(1), b(2) and c(10-14). The alpha and beta chains form an alternating ring which encloses part of the gamma chain. F(1) is attached to F(0) by a central stalk formed by the gamma and epsilon chains, while a peripheral stalk is formed by the delta and b chains.

Its subcellular location is the cell inner membrane. In terms of biological role, f(1)F(0) ATP synthase produces ATP from ADP in the presence of a proton or sodium gradient. F-type ATPases consist of two structural domains, F(1) containing the extramembraneous catalytic core and F(0) containing the membrane proton channel, linked together by a central stalk and a peripheral stalk. During catalysis, ATP synthesis in the catalytic domain of F(1) is coupled via a rotary mechanism of the central stalk subunits to proton translocation. Its function is as follows. Component of the F(0) channel, it forms part of the peripheral stalk, linking F(1) to F(0). This chain is ATP synthase subunit b 1, found in Cereibacter sphaeroides (strain ATCC 17025 / ATH 2.4.3) (Rhodobacter sphaeroides).